Here is a 115-residue protein sequence, read N- to C-terminus: MRFQVYILHLCFFILVVLTYLSQGQSYTTTTTTSTTEQPTFLQKIHETFKKVKENAKIHNLYIFDPPTWIYTTTTEKPVESTENFDITNRQLITVPVRCPPNYDFIKGRCREKIP.

A signal peptide spans Met1–Gly24. Positions Gln25–Arg90 are excised as a propeptide. A disulfide bridge links Cys99 with Cys110.

This sequence belongs to the secapin family. Expressed in the epidermis, fat body and venom gland.

The protein resides in the secreted. Functionally, serine protease inhibitor which exhibits antifibrinolytic, antielastolytic and antimicrobial activities. Displays antimicrobial activity against bacteria and fungi. Likely functions in the innate immune response to microbial infection and possibly in the venom, as an antifibrinolytic agent. The recombinant form inhibits trypsin (IC(50)=80.02 nM, Ki=127.25 nM), chymotrypsin (IC(50)=393.78 nM, Ki=432.59 nM), the microbial serine proteases subtilisin A (IC(50)=379.20 nM, Ki=492.77 nM) and proteinase K (IC(50)=189.43 nM, Ki=271.76 nM), plasmin (IC(50)=457.98 nM, Ki=502.91 nM), human elastase (IC(50)=347.81 nM, Ki=469.90 nM) and porcine elastase (IC(50)=94.70 nM, Ki=125.62 nM). Does not inhibit thrombin. Binds to human plasmin and inhibits the plasmin-mediated degradation of fibrin to fibrin degradation products, indicating its role as an anti-fibrinolytic agent. Also binds to bacterial and fungal surfaces. Exhibits antimicrobial activity against the Gram-positive bacteria B.thuringiensis (MIC=4.21 uM) and P.larvae (MIC=11.13 uM), the Gram-negative bacteria E.coli (MIC=6.50 uM) and the multidrug-resistant A.baumannii (MIC=5 ug/ml, MBC=10 ug/ml), as well as against the fungus B.bassiana (IC(50)=2.57 uM). The synthetic peptide also exhibits antimicrobial activity against the Gram-positive bacterium P.larvae (MIC=41.12 uM), the Gram-negative bacterium P.aeruginosa (MIC=65.75 uM), and the fungus B.bassiana (IC(50)=44.27 uM). Is also able to prevent A.baumannii biofilm formation and eliminate established A.baumannii biofilms. In vitro, does not induce an inflammatory response and has no cytotoxic activity against mammalian cells. This Apis cerana (Indian honeybee) protein is Secapin.